The chain runs to 478 residues: F-box protein YDR306C (478 aa).

Positions 1-14 are enriched in basic residues; sequence MANKSRPKKIKAPY. 2 disordered regions span residues 1–32 and 67–101; these read MANKSRPKKIKAPYRKYVAGEGFSSTRNDNKA and RLSNEKKDKKGRKQSPSSSSTSSSKGEKNGKVIES. The span at 80–90 shows a compositional bias: low complexity; it reads QSPSSSSTSSS. The segment covering 91–101 has biased composition (basic and acidic residues); that stretch reads KGEKNGKVIES. Residues 112-173 enclose the F-box domain; sequence KMVLPWEIQH…CLPKLYYAPA (62 aa).

In terms of assembly, interacts with SKP1. Component of the probable SCF(YDR306C) complex containing CDC53, SKP1, RBX1 and YDR306C. In terms of processing, autoubiquitinated by the E3 ubiquitin ligase complex in conjunction with the E2 enzyme CDC34.

The protein operates within protein modification; protein ubiquitination. Its function is as follows. Substrate recognition component of a SCF (SKP1-CUL1-F-box protein) E3 ubiquitin-protein ligase complex which mediates the ubiquitination and subsequent proteasomal degradation of target proteins. Probably recognizes and binds to phosphorylated target proteins. This Saccharomyces cerevisiae (strain ATCC 204508 / S288c) (Baker's yeast) protein is F-box protein YDR306C.